The following is a 96-amino-acid chain: Putative regulatory protein DET0036 (96 aa).

It belongs to the RemA family.

The sequence is that of Putative regulatory protein DET0036 from Dehalococcoides mccartyi (strain ATCC BAA-2266 / KCTC 15142 / 195) (Dehalococcoides ethenogenes (strain 195)).